The following is a 396-amino-acid chain: Elongation factor Tu 2 (396 aa).

Residues 10–206 (KPHVNVGTIG…TLDTYIPEPE (197 aa)) form the tr-type G domain. A G1 region spans residues 19–26 (GHVDHGKT). 19–26 (GHVDHGKT) serves as a coordination point for GTP. A Mg(2+)-binding site is contributed by Thr-26. The segment at 60 to 64 (GITIN) is G2. The G3 stretch occupies residues 81–84 (DCPG). GTP contacts are provided by residues 81 to 85 (DCPGH) and 136 to 139 (NKCD). Positions 136-139 (NKCD) are G4. The segment at 174-176 (SAL) is G5.

It belongs to the TRAFAC class translation factor GTPase superfamily. Classic translation factor GTPase family. EF-Tu/EF-1A subfamily. As to quaternary structure, monomer.

The protein localises to the cytoplasm. The enzyme catalyses GTP + H2O = GDP + phosphate + H(+). Functionally, GTP hydrolase that promotes the GTP-dependent binding of aminoacyl-tRNA to the A-site of ribosomes during protein biosynthesis. The polypeptide is Elongation factor Tu 2 (Psychrobacter sp. (strain PRwf-1)).